Consider the following 466-residue polypeptide: Paraneoplastic antigen Ma3 homolog (466 aa).

Residues 379–408 form a disordered region; sequence RPYQGSRRRRHRRRGQHRKGGVPRDDSQGT. Positions 384-399 are enriched in basic residues; sequence SRRRRHRRRGQHRKGG. The CCHC-type zinc-finger motif lies at 415-432; the sequence is TFCYSCGEDGHIRVHCFN. Residues 441–466 are disordered; it reads QKRQAAMEKGNRSWAWEKSHPKPKTK. Basic and acidic residues predominate over residues 445-460; the sequence is AAMEKGNRSWAWEKSH.

The protein belongs to the PNMA family. As to expression, expressed in the cerebrum and cerebellum.

It localises to the nucleus. Its subcellular location is the nucleolus. This is Paraneoplastic antigen Ma3 homolog (Pnma3) from Mus musculus (Mouse).